The chain runs to 747 residues: E3 UFM1-protein ligase 1 homolog (747 aa).

Positions 403-468 are disordered; it reads EKKKQCGSKA…GTVQVNSEEL (66 aa). Basic residues predominate over residues 429–438; that stretch reads GGKGGKKGGK. Over residues 439–449 the composition is skewed to gly residues; that stretch reads GGKNGGGGGKG. Residues 450–465 are compositionally biased toward polar residues; that stretch reads ATSSVPTGSGTVQVNS.

The protein belongs to the UFL1 family.

In terms of biological role, E3 UFM1-protein ligase that mediates ufmylation of target proteins. The protein is E3 UFM1-protein ligase 1 homolog (ufl-1) of Caenorhabditis briggsae.